Consider the following 466-residue polypeptide: ATP synthase subunit beta (466 aa).

155–162 (GGAGVGKT) is an ATP binding site.

This sequence belongs to the ATPase alpha/beta chains family. In terms of assembly, F-type ATPases have 2 components, CF(1) - the catalytic core - and CF(0) - the membrane proton channel. CF(1) has five subunits: alpha(3), beta(3), gamma(1), delta(1), epsilon(1). CF(0) has three main subunits: a(1), b(2) and c(9-12). The alpha and beta chains form an alternating ring which encloses part of the gamma chain. CF(1) is attached to CF(0) by a central stalk formed by the gamma and epsilon chains, while a peripheral stalk is formed by the delta and b chains.

It is found in the cell inner membrane. It carries out the reaction ATP + H2O + 4 H(+)(in) = ADP + phosphate + 5 H(+)(out). Produces ATP from ADP in the presence of a proton gradient across the membrane. The catalytic sites are hosted primarily by the beta subunits. In Bordetella bronchiseptica (strain ATCC BAA-588 / NCTC 13252 / RB50) (Alcaligenes bronchisepticus), this protein is ATP synthase subunit beta.